Reading from the N-terminus, the 246-residue chain is MTSSVSRPSGRRADELRKVALTRHYTKHAEGSVLVEFGDTKVLCTASVAERVPEFLRERGQGWLTAEYGMLPRATHTRSDREAARGKQTGRTQEIQRLIGRALRAVFDLEALGPRTIHIDCDVIQADGGTRTASITGAFVAAHDAVSTLIAAGKLARSPITDHVAAISVGVYEGAPVLDLDYAEDSRCDTDMNVVMTGAGGFVEVQGTAEGVPFSRAEMNALLDLAQGGIAELVQLQKDVLGASHA.

Phosphate-binding positions include arginine 91 and 129–131; that span reads GTR.

Belongs to the RNase PH family. In terms of assembly, homohexameric ring arranged as a trimer of dimers.

The enzyme catalyses tRNA(n+1) + phosphate = tRNA(n) + a ribonucleoside 5'-diphosphate. Functionally, phosphorolytic 3'-5' exoribonuclease that plays an important role in tRNA 3'-end maturation. Removes nucleotide residues following the 3'-CCA terminus of tRNAs; can also add nucleotides to the ends of RNA molecules by using nucleoside diphosphates as substrates, but this may not be physiologically important. Probably plays a role in initiation of 16S rRNA degradation (leading to ribosome degradation) during starvation. This Burkholderia orbicola (strain MC0-3) protein is Ribonuclease PH.